A 420-amino-acid chain; its full sequence is Transcriptional adapter 2-beta (420 aa).

A ZZ-type zinc finger spans residues 4 to 59 (LGKKYCVYCLAEVSPLRFRCTECQDIELCPECFSAGAEIGHHRRYHGYQLVDGGRF). 8 residues coordinate Zn(2+): C9, C12, C23, C26, C32, C35, H45, and H49. The 54-residue stretch at 65–118 (EAEGGWTSREEQLLLDAIEQFGFGNWEDMAAHVGASRTPQEVMEHYVSMYIHGN) folds into the SANT domain. A disordered region spans residues 305–335 (SAEYEAARHKREKRKENKNLAGSKRGKEDGK).

In terms of assembly, interacts with GCN5L2, SMARCA4, SMARCE1 and PAX5. Component of the TFTC-HAT complex.

It localises to the nucleus. In terms of biological role, coactivates PAX5-dependent transcription together with either SMARCA4 or GCN5L2. In Homo sapiens (Human), this protein is Transcriptional adapter 2-beta (TADA2B).